The following is a 495-amino-acid chain: Serine/threonine-protein kinase F (495 aa).

Residues Tyr-46 to Leu-314 form the Protein kinase domain. Residues Leu-52 to Ala-60 and Lys-77 contribute to the ATP site. The active-site Proton acceptor is the Asp-187. The segment at Gly-316–Pro-354 is disordered. The span at Thr-329–Pro-350 shows a compositional bias: polar residues.

It belongs to the protein kinase superfamily. Ser/Thr protein kinase family.

It carries out the reaction L-seryl-[protein] + ATP = O-phospho-L-seryl-[protein] + ADP + H(+). The enzyme catalyses L-threonyl-[protein] + ATP = O-phospho-L-threonyl-[protein] + ADP + H(+). In Synechocystis sp. (strain ATCC 27184 / PCC 6803 / Kazusa), this protein is Serine/threonine-protein kinase F (spkF).